Here is a 424-residue protein sequence, read N- to C-terminus: Riboflavin biosynthesis protein RibBA (424 aa).

The DHBP synthase stretch occupies residues 1 to 206 (MVTCEAGIAS…VDDLITYRWT (206 aa)). Residues 32–33 (RE), Asp-37, 145–149 (RPGHT), and Glu-169 contribute to the D-ribulose 5-phosphate site. Glu-33 provides a ligand contact to Mg(2+). Mg(2+) is bound at residue His-148. Positions 207–424 (FDSLVEHVSS…YETVERTSCC (218 aa)) are GTP cyclohydrolase II. GTP is bound at residue 257 to 261 (RVHSE). Cys-262, Cys-273, and Cys-275 together coordinate Zn(2+). GTP contacts are provided by residues Gln-278, 301-303 (EGR), and Thr-323. Asp-335 acts as the Proton acceptor; for GTP cyclohydrolase activity in catalysis. Residue Arg-337 is the Nucleophile; for GTP cyclohydrolase activity of the active site. Residues Thr-358 and Lys-363 each coordinate GTP.

It in the N-terminal section; belongs to the DHBP synthase family. In the C-terminal section; belongs to the GTP cyclohydrolase II family. The cofactor is Mg(2+). Mn(2+) serves as cofactor. Requires Zn(2+) as cofactor.

It catalyses the reaction D-ribulose 5-phosphate = (2S)-2-hydroxy-3-oxobutyl phosphate + formate + H(+). The catalysed reaction is GTP + 4 H2O = 2,5-diamino-6-hydroxy-4-(5-phosphoribosylamino)-pyrimidine + formate + 2 phosphate + 3 H(+). It functions in the pathway cofactor biosynthesis; riboflavin biosynthesis; 2-hydroxy-3-oxobutyl phosphate from D-ribulose 5-phosphate: step 1/1. The protein operates within cofactor biosynthesis; riboflavin biosynthesis; 5-amino-6-(D-ribitylamino)uracil from GTP: step 1/4. Functionally, catalyzes the conversion of D-ribulose 5-phosphate to formate and 3,4-dihydroxy-2-butanone 4-phosphate. Catalyzes the conversion of GTP to 2,5-diamino-6-ribosylamino-4(3H)-pyrimidinone 5'-phosphate (DARP), formate and pyrophosphate. The polypeptide is Riboflavin biosynthesis protein RibBA (Chlamydia muridarum (strain MoPn / Nigg)).